The following is a 127-amino-acid chain: MEAGNRSGTPQHRQLSEIRQDLSSSPDTDAEEFRLLLLLFEQLPSFTLAAKDRSDVRLPDLGNLFLVWATECDSNSFDTDPSLPSFFALSLSNKETISYFTLPISRSIREIYLVNFTNALKNMYFSA.

A compositionally biased stretch (polar residues) spans 1 to 13 (MEAGNRSGTPQHR). The tract at residues 1-26 (MEAGNRSGTPQHRQLSEIRQDLSSSP) is disordered.

This is an uncharacterized protein from Saccharomyces cerevisiae (strain ATCC 204508 / S288c) (Baker's yeast).